A 122-amino-acid chain; its full sequence is Large ribosomal subunit protein uL14 (122 aa).

The protein belongs to the universal ribosomal protein uL14 family. Part of the 50S ribosomal subunit. Forms a cluster with proteins L3 and L19. In the 70S ribosome, L14 and L19 interact and together make contacts with the 16S rRNA in bridges B5 and B8.

Binds to 23S rRNA. Forms part of two intersubunit bridges in the 70S ribosome. The chain is Large ribosomal subunit protein uL14 from Shewanella frigidimarina (strain NCIMB 400).